Here is a 37-residue protein sequence, read N- to C-terminus: Disintegrin morulustatin (37 aa).

3 disulfides stabilise this stretch: cysteine 12/cysteine 16, cysteine 22/cysteine 36, and cysteine 24/cysteine 31.

The protein belongs to the venom metalloproteinase (M12B) family. P-II subfamily. P-IIa sub-subfamily. Expressed by the venom gland.

The protein resides in the secreted. Inhibits ADP-induced platelet aggregation in human whole blood in a concentration-dependent manner (IC(50)=89.5 nM). The sequence is that of Disintegrin morulustatin from Crotalus morulus (Tamaulipan rock rattlesnake).